Consider the following 372-residue polypeptide: Alanine racemase (372 aa).

Lys-41 acts as the Proton acceptor; specific for D-alanine in catalysis. The residue at position 41 (Lys-41) is an N6-(pyridoxal phosphate)lysine. Arg-139 is a binding site for substrate. Residue Tyr-268 is the Proton acceptor; specific for L-alanine of the active site. Residue Met-316 participates in substrate binding.

It belongs to the alanine racemase family. Pyridoxal 5'-phosphate is required as a cofactor.

The enzyme catalyses L-alanine = D-alanine. The protein operates within amino-acid biosynthesis; D-alanine biosynthesis; D-alanine from L-alanine: step 1/1. Functionally, catalyzes the interconversion of L-alanine and D-alanine. May also act on other amino acids. This Borreliella burgdorferi (strain ATCC 35210 / DSM 4680 / CIP 102532 / B31) (Borrelia burgdorferi) protein is Alanine racemase (alr).